We begin with the raw amino-acid sequence, 228 residues long: Urease accessory protein UreF (228 aa).

The protein belongs to the UreF family. In terms of assembly, ureD, UreF and UreG form a complex that acts as a GTP-hydrolysis-dependent molecular chaperone, activating the urease apoprotein by helping to assemble the nickel containing metallocenter of UreC. The UreE protein probably delivers the nickel.

The protein localises to the cytoplasm. In terms of biological role, required for maturation of urease via the functional incorporation of the urease nickel metallocenter. In Yersinia pestis bv. Antiqua (strain Antiqua), this protein is Urease accessory protein UreF.